Here is a 388-residue protein sequence, read N- to C-terminus: Succinate--CoA ligase [ADP-forming] subunit beta (388 aa).

An ATP-grasp domain is found at 9–244; that stretch reads KEIFRSMGVA…LEEEDPKEIE (236 aa). ATP-binding positions include Lys46, 53-55, Glu99, Cys102, and Glu107; that span reads GRG. Mg(2+) contacts are provided by Asn199 and Asp213. Residues Asn264 and 321-323 each bind substrate; that span reads GIM.

Belongs to the succinate/malate CoA ligase beta subunit family. Heterotetramer of two alpha and two beta subunits. The cofactor is Mg(2+).

It carries out the reaction succinate + ATP + CoA = succinyl-CoA + ADP + phosphate. The enzyme catalyses GTP + succinate + CoA = succinyl-CoA + GDP + phosphate. The protein operates within carbohydrate metabolism; tricarboxylic acid cycle; succinate from succinyl-CoA (ligase route): step 1/1. Its function is as follows. Succinyl-CoA synthetase functions in the citric acid cycle (TCA), coupling the hydrolysis of succinyl-CoA to the synthesis of either ATP or GTP and thus represents the only step of substrate-level phosphorylation in the TCA. The beta subunit provides nucleotide specificity of the enzyme and binds the substrate succinate, while the binding sites for coenzyme A and phosphate are found in the alpha subunit. The polypeptide is Succinate--CoA ligase [ADP-forming] subunit beta (Staphylococcus haemolyticus (strain JCSC1435)).